Reading from the N-terminus, the 328-residue chain is uncharacterized protein (328 aa).

This is an uncharacterized protein from Bacillus anthracis.